The primary structure comprises 95 residues: MITITEHYTPMFRRGYRMQFEKTQDCHVILYPEGMAKLNDSATFILQLVDGERTIANIIDELNERFPEAGGVNDDVKDFFAQAHAQKWITFREPA.

The protein belongs to the PqqD family. Monomer. Interacts with PqqE.

It participates in cofactor biosynthesis; pyrroloquinoline quinone biosynthesis. Its function is as follows. Functions as a PqqA binding protein and presents PqqA to PqqE, in the pyrroloquinoline quinone (PQQ) biosynthetic pathway. The polypeptide is PqqA binding protein (Rahnella aquatilis).